Consider the following 295-residue polypeptide: Shikimate dehydrogenase (NADP(+)) (295 aa).

Shikimate-binding positions include 24-26 (SRS) and Thr-71. The active-site Proton acceptor is the Lys-75. Glu-87 contacts NADP(+). The shikimate site is built by Asn-96 and Asp-111. NADP(+) contacts are provided by residues 136–140 (GAGGA), 160–165 (NRTASR), and Met-233. Tyr-235 contributes to the shikimate binding site. Gly-256 is a binding site for NADP(+).

It belongs to the shikimate dehydrogenase family. In terms of assembly, homodimer.

It carries out the reaction shikimate + NADP(+) = 3-dehydroshikimate + NADPH + H(+). It functions in the pathway metabolic intermediate biosynthesis; chorismate biosynthesis; chorismate from D-erythrose 4-phosphate and phosphoenolpyruvate: step 4/7. Involved in the biosynthesis of the chorismate, which leads to the biosynthesis of aromatic amino acids. Catalyzes the reversible NADPH linked reduction of 3-dehydroshikimate (DHSA) to yield shikimate (SA). This Cupriavidus taiwanensis (strain DSM 17343 / BCRC 17206 / CCUG 44338 / CIP 107171 / LMG 19424 / R1) (Ralstonia taiwanensis (strain LMG 19424)) protein is Shikimate dehydrogenase (NADP(+)).